Consider the following 663-residue polypeptide: Innate immunity activator protein (663 aa).

The tract at residues M1–W68 is disordered. Positions R40–A50 are enriched in low complexity. A coiled-coil region spans residues A118–L147. The short motif at P164–I170 is the Nuclear localization signal (NLS) 1 element. 3 disordered regions span residues R242 to L362, V378 to R425, and P444 to G493. Positions E259–L272 are enriched in low complexity. Residues P282–P298 show a composition bias toward pro residues. Basic and acidic residues predominate over residues T327–S340. The Nuclear localization signal (NLS) 2 motif lies at P332–K338. The span at A350–S361 shows a compositional bias: polar residues. The short motif at P422 to H428 is the Nuclear localization signal (NLS) 3 element. Positions E455 to P475 are enriched in low complexity.

As to quaternary structure, interacts with IRAK1, NOD2 and RIPK2; the interaction takes place upon PRR stimulation. Interacts with YWHAQ/14-3-3T; the interaction increases upon PRR stimulation and is required for cellular signaling pathway activation and cytokine secretion. Interacts (via N-terminal domain) with CYTH1 and CYTH2 (via their N-terminal domains). Interacts with FBXW11 and BTRC; associates with SCF E3 ubiquitin-protein ligase complexes. Highly expressed in intestinal myeloid-derived cells and expressed in monocyte-derived macrophages upon induction by PRR activation.

Its subcellular location is the nucleus. It is found in the cytoplasm. Functionally, expressed in peripheral macrophages and intestinal myeloid-derived cells, is required for optimal PRR (pattern recognition receptor)-induced signaling, cytokine secretion, and bacterial clearance. Upon stimulation of a broad range of PRRs (pattern recognition receptor) such as NOD2 or TLR2, TLR3, TLR4, TLR5, TLR7 and TLR9, associates with YWHAQ/14-3-3T, which in turn leads to the recruitment and activation of MAP kinases and NF-kappa-B signaling complexes that amplifies PRR-induced downstream signals and cytokine secretion. In the intestine, regulates adherens junction stability by regulating the degradation of CYTH1 and CYTH2, probably acting as substrate cofactor for SCF E3 ubiquitin-protein ligase complexes. Stabilizes adherens junctions by limiting CYTH1-dependent ARF6 activation. The sequence is that of Innate immunity activator protein from Homo sapiens (Human).